Here is a 717-residue protein sequence, read N- to C-terminus: uncharacterized protein (717 aa).

Residues 19–38 form a helical membrane-spanning segment; that stretch reads VFLSTIFVSIIFCLGILFLV.

It to E.coli YtfN.

It localises to the membrane. This is an uncharacterized protein from Buchnera aphidicola subsp. Baizongia pistaciae (strain Bp).